The chain runs to 872 residues: DNA mismatch repair protein MutS (872 aa).

Residue G602–S609 participates in ATP binding.

The protein belongs to the DNA mismatch repair MutS family.

Its function is as follows. This protein is involved in the repair of mismatches in DNA. It is possible that it carries out the mismatch recognition step. This protein has a weak ATPase activity. In Staphylococcus aureus (strain Mu3 / ATCC 700698), this protein is DNA mismatch repair protein MutS.